We begin with the raw amino-acid sequence, 340 residues long: NADH-quinone oxidoreductase subunit H (340 aa).

The next 8 membrane-spanning stretches (helical) occupy residues 4-24 (TIGILIWIIIKILVIVVPLLL), 78-98 (YLFVIAPLFALVPSLVGWAVI), 113-133 (VLYLFAMSSLGVYGVLIAGWA), 151-171 (VSYEIAMGFALVGVLLAAGSM), 184-204 (MLHWWFIPLLPLFLVFWIAGI), 244-264 (SMILISTFMAILFMGGWLSPF), 273-293 (IFFVVPGFVWLLLKISFFLFV), and 316-336 (VLIPVTIVWLVVTSLMVVAHV).

It belongs to the complex I subunit 1 family. In terms of assembly, NDH-1 is composed of 14 different subunits. Subunits NuoA, H, J, K, L, M, N constitute the membrane sector of the complex.

It is found in the cell inner membrane. The enzyme catalyses a quinone + NADH + 5 H(+)(in) = a quinol + NAD(+) + 4 H(+)(out). In terms of biological role, NDH-1 shuttles electrons from NADH, via FMN and iron-sulfur (Fe-S) centers, to quinones in the respiratory chain. The immediate electron acceptor for the enzyme in this species is believed to be ubiquinone. Couples the redox reaction to proton translocation (for every two electrons transferred, four hydrogen ions are translocated across the cytoplasmic membrane), and thus conserves the redox energy in a proton gradient. This subunit may bind ubiquinone. This chain is NADH-quinone oxidoreductase subunit H, found in Legionella pneumophila (strain Paris).